The following is a 78-amino-acid chain: Conotoxin TsMSGL-11 (78 aa).

An N-terminal signal peptide occupies residues 1–24 (MSGLGIMVLTLLLLVFMATSHQDA). Positions 25 to 44 (GEKQATQRDAINVRRRRSIT) are excised as a propeptide. Disulfide bonds link Cys-51–Cys-63, Cys-55–Cys-72, and Cys-62–Cys-76. A Phenylalanine amide modification is found at Phe-77.

It belongs to the conotoxin O3 superfamily. In terms of tissue distribution, expressed by the venom duct.

It is found in the secreted. This chain is Conotoxin TsMSGL-11, found in Conus tessulatus (Tessellate cone).